The following is a 595-amino-acid chain: Arginine--tRNA ligase (595 aa).

The 'HIGH' region motif lies at 132-142 (ANPTGPLHVGH).

It belongs to the class-I aminoacyl-tRNA synthetase family. Monomer.

Its subcellular location is the cytoplasm. The enzyme catalyses tRNA(Arg) + L-arginine + ATP = L-arginyl-tRNA(Arg) + AMP + diphosphate. The chain is Arginine--tRNA ligase from Cupriavidus taiwanensis (strain DSM 17343 / BCRC 17206 / CCUG 44338 / CIP 107171 / LMG 19424 / R1) (Ralstonia taiwanensis (strain LMG 19424)).